Reading from the N-terminus, the 190-residue chain is UPF0149 protein NT01EI_3357 (190 aa).

The protein belongs to the UPF0149 family.

The sequence is that of UPF0149 protein NT01EI_3357 from Edwardsiella ictaluri (strain 93-146).